A 66-amino-acid chain; its full sequence is Large ribosomal subunit protein bL35 (66 aa).

This sequence belongs to the bacterial ribosomal protein bL35 family.

The protein is Large ribosomal subunit protein bL35 of Lysinibacillus sphaericus (strain C3-41).